The sequence spans 196 residues: Carnitine operon protein CaiE (196 aa).

The tract at residues 176 to 196 (LRQMEENRPRLQGTTDVAPKR) is disordered.

This sequence belongs to the transferase hexapeptide repeat family.

Its pathway is amine and polyamine metabolism; carnitine metabolism. In terms of biological role, overproduction of CaiE stimulates the activity of CaiB and CaiD. The chain is Carnitine operon protein CaiE from Escherichia fergusonii (strain ATCC 35469 / DSM 13698 / CCUG 18766 / IAM 14443 / JCM 21226 / LMG 7866 / NBRC 102419 / NCTC 12128 / CDC 0568-73).